A 400-amino-acid chain; its full sequence is Acetate kinase (400 aa).

Residue N10 participates in Mg(2+) binding. K17 contributes to the ATP binding site. Residue R91 participates in substrate binding. The active-site Proton donor/acceptor is the D150. Residues 210–214 (HLGNG), 285–287 (DCR), and 333–337 (GIGEN) each bind ATP. E387 contributes to the Mg(2+) binding site.

This sequence belongs to the acetokinase family. As to quaternary structure, homodimer. The cofactor is Mg(2+). It depends on Mn(2+) as a cofactor.

It is found in the cytoplasm. The enzyme catalyses acetate + ATP = acetyl phosphate + ADP. The protein operates within metabolic intermediate biosynthesis; acetyl-CoA biosynthesis; acetyl-CoA from acetate: step 1/2. Its function is as follows. Catalyzes the formation of acetyl phosphate from acetate and ATP. Can also catalyze the reverse reaction. The polypeptide is Acetate kinase (Photorhabdus laumondii subsp. laumondii (strain DSM 15139 / CIP 105565 / TT01) (Photorhabdus luminescens subsp. laumondii)).